Consider the following 304-residue polypeptide: Putative S-adenosyl-L-methionine-dependent methyltransferase MAP_4189c (304 aa).

S-adenosyl-L-methionine-binding positions include Asp130 and Asp159–Leu160.

This sequence belongs to the UPF0677 family.

Its function is as follows. Exhibits S-adenosyl-L-methionine-dependent methyltransferase activity. The polypeptide is Putative S-adenosyl-L-methionine-dependent methyltransferase MAP_4189c (Mycolicibacterium paratuberculosis (strain ATCC BAA-968 / K-10) (Mycobacterium paratuberculosis)).